The sequence spans 464 residues: UDP-N-acetylmuramoylalanine--D-glutamate ligase (464 aa).

Residue 112–118 coordinates ATP; the sequence is GTDGKTT.

Belongs to the MurCDEF family.

It is found in the cytoplasm. It carries out the reaction UDP-N-acetyl-alpha-D-muramoyl-L-alanine + D-glutamate + ATP = UDP-N-acetyl-alpha-D-muramoyl-L-alanyl-D-glutamate + ADP + phosphate + H(+). It participates in cell wall biogenesis; peptidoglycan biosynthesis. Its function is as follows. Cell wall formation. Catalyzes the addition of glutamate to the nucleotide precursor UDP-N-acetylmuramoyl-L-alanine (UMA). This Chlorobium phaeobacteroides (strain DSM 266 / SMG 266 / 2430) protein is UDP-N-acetylmuramoylalanine--D-glutamate ligase.